A 579-amino-acid polypeptide reads, in one-letter code: Effector protein HopAB3 (579 aa).

3 disordered regions span residues 1-140, 214-294, and 384-408; these read MAGI…TGAV, VRQQ…NQVP, and PARA…PDSA. The segment at 1–336 is host recognition; Pto interaction; that stretch reads MAGINGAGPS…LRAALERHIL (336 aa). Low complexity-rich tracts occupy residues 23–39, 89–101, 219–248, 266–281, and 384–402; these read ASGG…SSNS, RPQE…APQA, ASAP…ESSS, NQRR…ASQR, and PARA…ATVS. Positions 337-579 are E3 ubiquitin-protein ligase; it reads HRRPIPMDIA…IAKYAFRIVP (243 aa).

It belongs to the HopAB family. In terms of assembly, interacts physically with plant cell Pto. Auto-ubiquitinated.

It localises to the secreted. Functionally, effector protein involved in gene-for-gene resistance in tomato plants. It is recognized by the host Pto resistance protein and elicits Pto and Prf-dependent hypersensitive response (HR) and programmed cell death (PCD), resulting in host immunity. In susceptible plants, acts as a virulence factor by suppressing PCD and HR-based plant immunity. This function requires its E3 ubiquitin ligase activity probably by recruiting E2 enzymes and transferring ubiquitin molecules to cellular proteins involved in regulation of PCD and targeting them for degradation. Enhances the development of disease symptoms and bacterial growth. The sequence is that of Effector protein HopAB3 (hopAB3) from Pseudomonas syringae pv. tomato.